The primary structure comprises 327 residues: GMP reductase (327 aa).

The Thioimidate intermediate role is filled by Cys-176. 205–228 (IIADGGIRTHGDIAKSIRFGATMV) is a binding site for NADP(+).

It belongs to the IMPDH/GMPR family. GuaC type 2 subfamily.

It carries out the reaction IMP + NH4(+) + NADP(+) = GMP + NADPH + 2 H(+). Functionally, catalyzes the irreversible NADPH-dependent deamination of GMP to IMP. It functions in the conversion of nucleobase, nucleoside and nucleotide derivatives of G to A nucleotides, and in maintaining the intracellular balance of A and G nucleotides. The polypeptide is GMP reductase (Streptococcus equi subsp. zooepidemicus (strain H70)).